The chain runs to 524 residues: Mitochondrial-processing peptidase subunit alpha (524 aa).

The N-terminal 32 residues, 1-32, are a transit peptide targeting the mitochondrion; the sequence is MATAVWAAARLLRGSAALCARPKFGSPAHRRF. K63 carries the N6-succinyllysine modification.

Belongs to the peptidase M16 family. Heterodimer of PMPCA (alpha) and PMPCB (beta) subunits, forming the mitochondrial processing protease (MPP) in which PMPCA is involved in substrate recognition and binding and PMPCB is the catalytic subunit.

The protein resides in the mitochondrion matrix. It is found in the mitochondrion inner membrane. In terms of biological role, substrate recognition and binding subunit of the essential mitochondrial processing protease (MPP), which cleaves the mitochondrial sequence off newly imported precursors proteins. This is Mitochondrial-processing peptidase subunit alpha (Pmpca) from Rattus norvegicus (Rat).